A 293-amino-acid chain; its full sequence is MKTFLIFALLAIAATSTIAQQQPFPQQPIPQQPQPYPQQPQPYPQQPFPPQQPFPQQPVPQQPQPYPQQPFPPQQPFPQQPPFWQQKPFPQQPPFGLQQPILSQQQPCTPQQTPLPQGQLYQTLLQLQIQYVHPSILQQLNPCKVFLQQQCSPVPVPQRIARSQMLQQSSCHVLQQQCCQQLPQIPEQFRHEAIRAIVYSIFLQEQPQQLVEGVSQPQQQLWPQQVGQCSFQQPQPQQVGQQQQVPQSAFLQPHQIAQLEATTSIALRTLPMMCSVNVPLYRILRGVGPSVGV.

Residues Met1–Ala19 form the signal peptide. The tract at residues Gln20 to Pro90 is disordered. The span at Pro25–Pro81 shows a compositional bias: pro residues.

This sequence belongs to the gliadin/glutenin family. In terms of tissue distribution, developing endosperm.

Sulfur-rich seed storage protein. This is B1-hordein from Hordeum vulgare (Barley).